The chain runs to 206 residues: Small ribosomal subunit protein uS4 (206 aa).

An S4 RNA-binding domain is found at 96–156; the sequence is TRLDNVVYRM…EKSRTQARIK (61 aa).

It belongs to the universal ribosomal protein uS4 family. Part of the 30S ribosomal subunit. Contacts protein S5. The interaction surface between S4 and S5 is involved in control of translational fidelity.

In terms of biological role, one of the primary rRNA binding proteins, it binds directly to 16S rRNA where it nucleates assembly of the body of the 30S subunit. Its function is as follows. With S5 and S12 plays an important role in translational accuracy. This Shewanella denitrificans (strain OS217 / ATCC BAA-1090 / DSM 15013) protein is Small ribosomal subunit protein uS4.